The following is a 257-amino-acid chain: 5-oxoprolinase subunit A (257 aa).

Belongs to the LamB/PxpA family. In terms of assembly, forms a complex composed of PxpA, PxpB and PxpC.

It catalyses the reaction 5-oxo-L-proline + ATP + 2 H2O = L-glutamate + ADP + phosphate + H(+). Catalyzes the cleavage of 5-oxoproline to form L-glutamate coupled to the hydrolysis of ATP to ADP and inorganic phosphate. The sequence is that of 5-oxoprolinase subunit A from Oceanobacillus iheyensis (strain DSM 14371 / CIP 107618 / JCM 11309 / KCTC 3954 / HTE831).